Reading from the N-terminus, the 325-residue chain is Elongation factor P--(R)-beta-lysine ligase (325 aa).

76-78 (SPE) lines the substrate pocket. Residues 100–102 (RNE) and N109 each bind ATP. A substrate-binding site is contributed by Y118. 244 to 245 (EL) provides a ligand contact to ATP. E251 contributes to the substrate binding site. Position 300 (G300) interacts with ATP.

Belongs to the class-II aminoacyl-tRNA synthetase family. EpmA subfamily. In terms of assembly, homodimer.

The catalysed reaction is D-beta-lysine + L-lysyl-[protein] + ATP = N(6)-((3R)-3,6-diaminohexanoyl)-L-lysyl-[protein] + AMP + diphosphate + H(+). Its function is as follows. With EpmB is involved in the beta-lysylation step of the post-translational modification of translation elongation factor P (EF-P). Catalyzes the ATP-dependent activation of (R)-beta-lysine produced by EpmB, forming a lysyl-adenylate, from which the beta-lysyl moiety is then transferred to the epsilon-amino group of a conserved specific lysine residue in EF-P. The polypeptide is Elongation factor P--(R)-beta-lysine ligase (Proteus mirabilis (strain HI4320)).